The following is a 418-amino-acid chain: Gamma-glutamyl phosphate reductase (418 aa).

Belongs to the gamma-glutamyl phosphate reductase family.

Its subcellular location is the cytoplasm. The catalysed reaction is L-glutamate 5-semialdehyde + phosphate + NADP(+) = L-glutamyl 5-phosphate + NADPH + H(+). The protein operates within amino-acid biosynthesis; L-proline biosynthesis; L-glutamate 5-semialdehyde from L-glutamate: step 2/2. In terms of biological role, catalyzes the NADPH-dependent reduction of L-glutamate 5-phosphate into L-glutamate 5-semialdehyde and phosphate. The product spontaneously undergoes cyclization to form 1-pyrroline-5-carboxylate. The chain is Gamma-glutamyl phosphate reductase from Moorella thermoacetica (strain ATCC 39073 / JCM 9320).